A 319-amino-acid polypeptide reads, in one-letter code: Tryptophan--tRNA ligase (319 aa).

Residues 8–10 (QPS) and 16–17 (GN) contribute to the ATP site. The 'HIGH' region motif lies at 9-17 (PSGDLHIGN). L-tryptophan is bound at residue Asp131. Residues 143–145 (GKD), Val182, and 189–193 (KMSKS) contribute to the ATP site. A 'KMSKS' region motif is present at residues 189–193 (KMSKS).

This sequence belongs to the class-I aminoacyl-tRNA synthetase family. Homodimer.

Its subcellular location is the cytoplasm. It carries out the reaction tRNA(Trp) + L-tryptophan + ATP = L-tryptophyl-tRNA(Trp) + AMP + diphosphate + H(+). Functionally, catalyzes the attachment of tryptophan to tRNA(Trp). This Campylobacter jejuni subsp. jejuni serotype O:2 (strain ATCC 700819 / NCTC 11168) protein is Tryptophan--tRNA ligase.